We begin with the raw amino-acid sequence, 194 residues long: Molybdenum cofactor guanylyltransferase (194 aa).

Residues 12–14 (LAG), lysine 25, asparagine 53, aspartate 70, and aspartate 100 contribute to the GTP site. Residue aspartate 100 participates in Mg(2+) binding.

Belongs to the MobA family. In terms of assembly, monomer. Mg(2+) is required as a cofactor.

It is found in the cytoplasm. It catalyses the reaction Mo-molybdopterin + GTP + H(+) = Mo-molybdopterin guanine dinucleotide + diphosphate. In terms of biological role, transfers a GMP moiety from GTP to Mo-molybdopterin (Mo-MPT) cofactor (Moco or molybdenum cofactor) to form Mo-molybdopterin guanine dinucleotide (Mo-MGD) cofactor. The sequence is that of Molybdenum cofactor guanylyltransferase from Aliivibrio fischeri (strain MJ11) (Vibrio fischeri).